The primary structure comprises 159 residues: NADH-quinone oxidoreductase subunit I (159 aa).

2 consecutive 4Fe-4S ferredoxin-type domains span residues arginine 51–aspartate 80 and threonine 90–asparagine 119. The [4Fe-4S] cluster site is built by cysteine 60, cysteine 63, cysteine 66, cysteine 70, cysteine 99, cysteine 102, cysteine 105, and cysteine 109.

Belongs to the complex I 23 kDa subunit family. In terms of assembly, NDH-1 is composed of 14 different subunits. Subunits NuoA, H, J, K, L, M, N constitute the membrane sector of the complex. The cofactor is [4Fe-4S] cluster.

The protein localises to the cell inner membrane. It carries out the reaction a quinone + NADH + 5 H(+)(in) = a quinol + NAD(+) + 4 H(+)(out). In terms of biological role, NDH-1 shuttles electrons from NADH, via FMN and iron-sulfur (Fe-S) centers, to quinones in the respiratory chain. The immediate electron acceptor for the enzyme in this species is believed to be ubiquinone. Couples the redox reaction to proton translocation (for every two electrons transferred, four hydrogen ions are translocated across the cytoplasmic membrane), and thus conserves the redox energy in a proton gradient. This is NADH-quinone oxidoreductase subunit I from Rickettsia prowazekii (strain Madrid E).